The chain runs to 271 residues: Troponin T, fast skeletal muscle (271 aa).

Residues methionine 1 to glutamate 21 show a composition bias toward acidic residues. Residues methionine 1–lysine 74 form a disordered region. Position 2 is an N-acetylserine (serine 2). Serine 2 bears the Phosphoserine mark. Composition is skewed to basic and acidic residues over residues glutamate 29–arginine 53 and proline 62–lysine 74. Phosphoserine is present on serine 90. Residues arginine 113–lysine 155 show a composition bias toward basic and acidic residues. Residues arginine 113–leucine 192 form a disordered region. Phosphoserine is present on residues serine 161, serine 168, and serine 169. Residues threonine 183 to leucine 192 show a composition bias toward basic and acidic residues. The residue at position 205 (serine 205) is a Phosphoserine. Position 221 is a phosphotyrosine (tyrosine 221). The tract at residues aspartate 249–lysine 271 is disordered.

It belongs to the troponin T family.

Troponin T is the tropomyosin-binding subunit of troponin, the thin filament regulatory complex which confers calcium-sensitivity to striated muscle actomyosin ATPase activity. The protein is Troponin T, fast skeletal muscle (TNNT3) of Sus scrofa (Pig).